Reading from the N-terminus, the 505-residue chain is MHKAQKFALGLLAAAAVATASDVVQLKKDTFDDFIKTNDLVLAEFFAPWCGHCKALAPEYEEAATTLKEKNIKLAKVDCTEETDLCQQHGVEGYPTLKVFRGLDNVSPYKGQRKAAAITSYMIKQSLPAVSEVTKDNLEEFKKADKAVLVAYVDASDKASSEVFTQVAEKLRDNYPFGSSSDAALAEAEGVKAPAIVLYKDFDEGKAVFSEKFEVEAIEKFAKTGATPLIGEIGPETYSDYMSAGIPLAYIFAETAEERKELSDKLKPIAEAQRGVINFGTIDAKAFGAHAGNLNLKTDKFPAFAIQEVAKNQKFPFDQEKEITFEAIKAFVDDFVAGKIEPSIKSEPIPEKQEGPVTVVVAKNYNEIVLDDTKDVLIEFYAPWCGHCKALAPKYEELGALYAKSEFKDRVVIAKVDATANDVPDEIQGFPTIKLYPAGAKGQPVTYSGSRTVEDLIKFIAENGKYKAAISEDAEETSSATETTTETATKSEEAAKETATEHDEL.

The first 20 residues, 1-20, serve as a signal peptide directing secretion; it reads MHKAQKFALGLLAAAAVATA. Thioredoxin domains lie at 21–128 and 335–465; these read SDVV…QSLP and FVAG…ENGK. Active-site nucleophile residues include Cys-50, Cys-53, Cys-385, and Cys-388. 2 cysteine pairs are disulfide-bonded: Cys-50–Cys-53 and Cys-385–Cys-388. The disordered stretch occupies residues 470-505; that stretch reads ISEDAEETSSATETTTETATKSEEAAKETATEHDEL. Residues 477-488 show a composition bias toward low complexity; it reads TSSATETTTETA. Positions 489–505 are enriched in basic and acidic residues; it reads TKSEEAAKETATEHDEL. A Prevents secretion from ER motif is present at residues 502–505; sequence HDEL.

This sequence belongs to the protein disulfide isomerase family.

It localises to the endoplasmic reticulum lumen. It catalyses the reaction Catalyzes the rearrangement of -S-S- bonds in proteins.. In terms of biological role, participates in the folding of proteins containing disulfide bonds, may be involved in glycosylation, prolyl hydroxylation and triglyceride transfer. This Humicola insolens (Soft-rot fungus) protein is Protein disulfide-isomerase.